An 840-amino-acid chain; its full sequence is DNA helicase MCM8 (840 aa).

Positions 16-54 are disordered; it reads QSWKRGRGGGNFSGKWREREHRPDLSKTTGKRTSEQTPQ. Residues 30-40 are compositionally biased toward basic and acidic residues; the sequence is KWREREHRPDL. Residues 402–609 form the MCM domain; it reads LFKLIVNSLC…HHDHLLSEHV (208 aa). Residue 454–461 participates in ATP binding; it reads GDPGLGKS. A Phosphoserine modification is found at Ser630.

The protein belongs to the MCM family. Component of the MCM8-MCM9 complex, which forms a hexamer composed of MCM8 and MCM9. Interacts with the DNA mismatch repair (MMR) complex composed at least of MSH2, MSH3, MSH6, PMS1 and MLH1. Interacts with RAD51; the interaction recruits RAD51 to DNA damage sites. Interacts with the MRN complex composed of MRE11, RAD50 and NBN/NBS1. Interacts with CDC6 and ORC2. Interacts with HROB; the interaction recruits the MCM8-MCM9 complex to DNA damage sites. Highest levels in placenta, lung and pancreas. Low levels in skeletal muscle and kidney. Expressed in various tumors with highest levels in colon and lung cancers.

It localises to the nucleus. Its subcellular location is the chromosome. It carries out the reaction ATP + H2O = ADP + phosphate + H(+). Component of the MCM8-MCM9 complex, a complex involved in the repair of double-stranded DNA breaks (DBSs) and DNA interstrand cross-links (ICLs) by homologous recombination (HR). Required for DNA resection by the MRE11-RAD50-NBN/NBS1 (MRN) complex by recruiting the MRN complex to the repair site and by promoting the complex nuclease activity. Probably by regulating the localization of the MNR complex, indirectly regulates the recruitment of downstream effector RAD51 to DNA damage sites including DBSs and ICLs. The MCM8-MCM9 complex is dispensable for DNA replication and S phase progression. However, may play a non-essential for DNA replication: may be involved in the activation of the prereplicative complex (pre-RC) during G(1) phase by recruiting CDC6 to the origin recognition complex (ORC). Probably by regulating HR, plays a key role during gametogenesis. Stabilizes MCM9 protein. The polypeptide is DNA helicase MCM8 (MCM8) (Homo sapiens (Human)).